A 467-amino-acid chain; its full sequence is Chromosomal replication initiator protein DnaA (467 aa).

The segment at 1–84 (MDISLDQLWD…LQVEFSVSPH (84 aa)) is domain I, interacts with DnaA modulators. The interval 84 to 125 (HASVEAEPPSRAISPTSGRAGSLPASTTLGLEVGGSLPMRAP) is domain II. A disordered region spans residues 89–108 (AEPPSRAISPTSGRAGSLPA). Over residues 96-108 (ISPTSGRAGSLPA) the composition is skewed to polar residues. The tract at residues 126–342 (DLNPKYSFSR…GALIRAVAYV (217 aa)) is domain III, AAA+ region. The ATP site is built by Gly170, Gly172, Lys173, and Thr174. A domain IV, binds dsDNA region spans residues 343–467 (SISGLPMSVE…LRVVANSRSS (125 aa)).

This sequence belongs to the DnaA family. Oligomerizes as a right-handed, spiral filament on DNA at oriC.

The protein resides in the cytoplasm. Plays an essential role in the initiation and regulation of chromosomal replication. ATP-DnaA binds to the origin of replication (oriC) to initiate formation of the DNA replication initiation complex once per cell cycle. Binds the DnaA box (a 9 base pair repeat at the origin) and separates the double-stranded (ds)DNA. Forms a right-handed helical filament on oriC DNA; dsDNA binds to the exterior of the filament while single-stranded (ss)DNA is stabiized in the filament's interior. The ATP-DnaA-oriC complex binds and stabilizes one strand of the AT-rich DNA unwinding element (DUE), permitting loading of DNA polymerase. After initiation quickly degrades to an ADP-DnaA complex that is not apt for DNA replication. Binds acidic phospholipids. This chain is Chromosomal replication initiator protein DnaA, found in Synechococcus sp. (strain JA-2-3B'a(2-13)) (Cyanobacteria bacterium Yellowstone B-Prime).